Here is a 382-residue protein sequence, read N- to C-terminus: Galactokinase (382 aa).

Glu-34–Asp-37 contributes to the substrate binding site. ATP is bound at residue Gly-124 to Ser-130. Positions 130 and 162 each coordinate Mg(2+). Residue Asp-174 is the Proton acceptor of the active site. Tyr-223 is a binding site for substrate.

It belongs to the GHMP kinase family. GalK subfamily.

It is found in the cytoplasm. The catalysed reaction is alpha-D-galactose + ATP = alpha-D-galactose 1-phosphate + ADP + H(+). The protein operates within carbohydrate metabolism; galactose metabolism. In terms of biological role, catalyzes the transfer of the gamma-phosphate of ATP to D-galactose to form alpha-D-galactose-1-phosphate (Gal-1-P). This chain is Galactokinase, found in Cronobacter sakazakii (strain ATCC BAA-894) (Enterobacter sakazakii).